A 372-amino-acid polypeptide reads, in one-letter code: GDP-mannose 4,6-dehydratase (372 aa).

NADP(+) contacts are provided by residues 8-13 (GITGQD), 63-64 (DL), 85-89 (LGAQS), and tyrosine 100. Residue threonine 132 is part of the active site. Catalysis depends on nucleophile residues glutamate 134 and tyrosine 156. The NADP(+) site is built by lysine 160, histidine 186, and arginine 191.

Belongs to the NAD(P)-dependent epimerase/dehydratase family. GDP-mannose 4,6-dehydratase subfamily. Requires NADP(+) as cofactor.

The enzyme catalyses GDP-alpha-D-mannose = GDP-4-dehydro-alpha-D-rhamnose + H2O. It functions in the pathway bacterial outer membrane biogenesis; LPS O-antigen biosynthesis. Its pathway is nucleotide-sugar biosynthesis; GDP-L-fucose biosynthesis via de novo pathway; GDP-L-fucose from GDP-alpha-D-mannose: step 1/2. In terms of biological role, catalyzes the conversion of GDP-D-mannose to GDP-4-dehydro-6-deoxy-D-mannose. In Yersinia enterocolitica serotype O:8 / biotype 1B (strain NCTC 13174 / 8081), this protein is GDP-mannose 4,6-dehydratase.